Here is a 577-residue protein sequence, read N- to C-terminus: Eukaryotic translation initiation factor 3 subunit D (577 aa).

The tract at residues 103-177 (DSTKTRFGRG…KDYDKPQRNR (75 aa)) is disordered. The span at 166 to 177 (GWKDYDKPQRNR) shows a compositional bias: basic and acidic residues. The RNA gate stretch occupies residues 305–319 (TLDMVTVNENAADAP). The interval 558-577 (GSFEDDGEGDVIEENVEEED) is disordered. Over residues 560-577 (FEDDGEGDVIEENVEEED) the composition is skewed to acidic residues.

This sequence belongs to the eIF-3 subunit D family. As to quaternary structure, component of the eukaryotic translation initiation factor 3 (eIF-3) complex.

It localises to the cytoplasm. Its function is as follows. mRNA cap-binding component of the eukaryotic translation initiation factor 3 (eIF-3) complex, which is involved in protein synthesis of a specialized repertoire of mRNAs and, together with other initiation factors, stimulates binding of mRNA and methionyl-tRNAi to the 40S ribosome. The eIF-3 complex specifically targets and initiates translation of a subset of mRNAs involved in cell proliferation. In the eIF-3 complex, eif3d specifically recognizes and binds the 7-methylguanosine cap of a subset of mRNAs. The chain is Eukaryotic translation initiation factor 3 subunit D from Sclerotinia sclerotiorum (strain ATCC 18683 / 1980 / Ss-1) (White mold).